The following is a 772-amino-acid chain: MEYTYQYSWIIPFIPLPVPILIGMGLLLFPTATKNHRRVWSFPSILLLSMVMLLSVYLSIQQINRSFIYQYVWSWTINNDFSLEFGHLIDPLASIMLILITTVGILVLFYSDNYMSHDQGYLRFFAYLSFFNTSMLGLVTSSNLIQIYIFWELVGMCSYLLIGFWFTRPIAATACQKAFVTNRVGDFGLLLGILGLYWITGSFEFRDLFEIVNNLIDNNNQVHFLFVTLCSFLLFAGAVAKSAQFPLHVWLPDAMEGPTPISALIHAATMVAAGIFLVARLLPLFVITPYIMNLISLIGIITVLLGATLALAQKDIKRSLAYSTMSQLGYMMLALGMGSYRAALFHLITHAYSKALLFLGSGSIIHSMESIVGYSPDKSQNMVLMGGLKKHVPITKTAFLVGTLSLCGIPPLACFWSKDEILNDSWLYSPIFAIIACSTAGFTAFYMFRVYLLTFDGHLNVHFQNYSGQKSSSVYSISLWGKQVPKRIQNPFCLLNLLTMNNNESTSFFWNNKCKLDGNVKKRIRPFITVTHFPNRKTFSYPHESDNTMLFSLFVLVLFTLFVAAIGIPFNQEGSDCDILSKLLNPSINLLHQNSNNFTDWYEFVTNASFSVSIALLGIFIATFLYKPIYSSLQNFNLLNSFYKRSANRVMWDKIQNWIYDWSYNRGYIDSFYTISLTGGIRGLAELSHFFDRRVIDGILNGFGLTSFFLGESLKYFGGGRISSYLLLYSIFIFIFLLMDSFFTNLPFFVLCQFLDSSFSMSISGFLLYENF.

Helical transmembrane passes span 9-29 (WIIPFIPLPVPILIGMGLLLF), 40-60 (WSFPSILLLSMVMLLSVYLSI), 89-109 (IDPLASIMLILITTVGILVLF), 125-145 (FAYLSFFNTSMLGLVTSSNLI), 147-167 (IYIFWELVGMCSYLLIGFWFT), 185-205 (GDFGLLLGILGLYWITGSFEF), 220-240 (NQVHFLFVTLCSFLLFAGAVA), 259-279 (TPISALIHAATMVAAGIFLVA), 290-312 (YIMNLISLIGIITVLLGATLALA), 328-348 (LGYMMLALGMGSYRAALFHLI), 355-375 (ALLFLGSGSIIHSMESIVGYS), 397-417 (TAFLVGTLSLCGIPPLACFWS), 426-446 (WLYSPIFAIIACSTAGFTAFY), 550-570 (LFSLFVLVLFTLFVAAIGIPF), 604-624 (FVTNASFSVSIALLGIFIATF), and 731-751 (IFIFIFLLMDSFFTNLPFFVL).

It belongs to the complex I subunit 5 family. As to quaternary structure, NDH is composed of at least 16 different subunits, 5 of which are encoded in the nucleus.

It localises to the plastid. It is found in the chloroplast thylakoid membrane. It catalyses the reaction a plastoquinone + NADH + (n+1) H(+)(in) = a plastoquinol + NAD(+) + n H(+)(out). The catalysed reaction is a plastoquinone + NADPH + (n+1) H(+)(in) = a plastoquinol + NADP(+) + n H(+)(out). In terms of biological role, NDH shuttles electrons from NAD(P)H:plastoquinone, via FMN and iron-sulfur (Fe-S) centers, to quinones in the photosynthetic chain and possibly in a chloroplast respiratory chain. The immediate electron acceptor for the enzyme in this species is believed to be plastoquinone. Couples the redox reaction to proton translocation, and thus conserves the redox energy in a proton gradient. This Oenothera argillicola (Appalachian evening primrose) protein is NAD(P)H-quinone oxidoreductase subunit 5, chloroplastic (ndhF).